A 195-amino-acid chain; its full sequence is Probable GTP-binding protein EngB (195 aa).

The region spanning 24-195 (GLKEVALAGR…MIFNAIEKYL (172 aa)) is the EngB-type G domain. Residues 32–39 (GRSNVGKS), 59–63 (GKTQT), 77–80 (DVPG), 144–147 (TKED), and 176–178 (YTA) contribute to the GTP site. Residues serine 39 and threonine 61 each coordinate Mg(2+).

It belongs to the TRAFAC class TrmE-Era-EngA-EngB-Septin-like GTPase superfamily. EngB GTPase family. Mg(2+) serves as cofactor.

Functionally, necessary for normal cell division and for the maintenance of normal septation. The sequence is that of Probable GTP-binding protein EngB from Macrococcus caseolyticus (strain JCSC5402) (Macrococcoides caseolyticum).